The chain runs to 743 residues: MEKPPVQHGAVCGPWDMKDRLGTGGFGNVCLYQNRETGELKAIKSCRLELSMKNKERWCQEIQIMKRLNHPNVVKACEVPPEMDFLVNDVPHLAMEYCAGGDLRKLLNKPENCCGLKESQVLNLMSDIGSGIQYLHEKRIIHRDLKPENIVLQECNGKTVHKIIDLGYAKDLDQGSLCTSFVGTLQYLAPELFENKPYSVTVDYWSFGTMVFECIAGFRPFLHNMQPFTWHEKIKKKDHKHIYAYEEMSGEIRFSSYLPQPNNLCSIIVDKIETWLQLLLNWDPIQRGGGMDCGRPQCFVLMDQILNLKIVHILNMTSAKIHSFHLQPEESLHTLQSRIETETGISTCNQELLLEMGVSLDPRKPASQCVIDGVKGWDSYMVYLFDKSKTVYEGPFQSRSLSECLNYIVQDSKVQLPIPQLRKVWAEAVHYVSGLKEDYSRLFQGQRAAMLSLLRFNTNLTKMKNTMVSASQQLGAKLQFFKRSIEIDLERYSDQMAYGISSEKMLRAWKEMEDKAVCFGKAGKIHFLDETIMGLHTEIVELQKSPCARRQGDVMEHLEQRAMELYKQLKPRSPDKAYSDSTEMVKILVQTVQGQDRVLKELFGHLSKLLGCKQKIIDLLPQIEMTVNNIKEADSSLMQMQAKRQREIWHLLKIACTQSSARSLGPASVETPITPRTSAWPDQSSSQALFSMLTTKDKSREILRHTIDKNSDYQKLLSSLILQTQTTMEQNSLMSLDFSWLNK.

A Protein kinase domain is found at 15-300 (WDMKDRLGTG…MDCGRPQCFV (286 aa)). ATP contacts are provided by residues 21-29 (LGTGGFGNV) and Lys44. The active-site Proton acceptor is the Asp144. Residues 453-474 (LLRFNTNLTKMKNTMVSASQQL) form a leucine-zipper region. An NEMO-binding region spans residues 736 to 741 (LDFSWL).

Belongs to the protein kinase superfamily. Ser/Thr protein kinase family. I-kappa-B kinase subfamily.

It localises to the cytoplasm. The protein localises to the nucleus. The enzyme catalyses L-seryl-[I-kappa-B protein] + ATP = O-phospho-L-seryl-[I-kappa-B protein] + ADP + H(+). Its activity is regulated as follows. Activated when phosphorylated and inactivated when dephosphorylated. Phosphorylates inhibitors of NF-kappa-B thus leading to the dissociation of the inhibitor/NF-kappa-B complex and ultimately the degradation of the inhibitor. Phosphorylates 'Ser-10' of histone H3 at NF-kappa-B-regulated promoters during inflammatory responses triggered by cytokines. In Xenopus tropicalis (Western clawed frog), this protein is Inhibitor of nuclear factor kappa-B kinase subunit alpha (chuk).